The sequence spans 432 residues: Tryptophan--tRNA ligase, cytoplasmic (432 aa).

The 'HIGH' region signature appears at 111–120 (PSSDSMHLGH). The short motif at 295–299 (KMSAS) is the 'KMSKS' region element.

Belongs to the class-I aminoacyl-tRNA synthetase family. Homodimer.

The protein resides in the cytoplasm. It catalyses the reaction tRNA(Trp) + L-tryptophan + ATP = L-tryptophyl-tRNA(Trp) + AMP + diphosphate + H(+). This is Tryptophan--tRNA ligase, cytoplasmic (WRS1) from Saccharomyces cerevisiae (strain ATCC 204508 / S288c) (Baker's yeast).